A 367-amino-acid polypeptide reads, in one-letter code: MSRRSLTLLKNLARNANGSGIQTRSVTYMPRPGDGAPRAVTLIPGDGIGPLVTNAVEQVMEAMHAPIFFEKYDVHGEMSRVPPEVMESIRKNKVCLKGGLKTPVGGGVSSLNVQLRKELDLFASLVNCFNLPGLPTRHENVDIVVIRENTEGEYAGLEHEVVPGVVESLKVITKFCSERIAKYAFEYAYLNNRKKVTAVHKANIMKLADGLFLESCREVAKKYPSITYNEIIVDNCCMQLVAKPEQFDVMVTPNLYGNLVANTAAGIAGGTGVMPGGNVGADHAVFEQGASAGNVGKDKIVLENKANPVALLLSSAMMLRHLQFPSFADRLETAVKKVIAEGKCRTKDLGGTSTTQEVVDAVIAKLD.

The N-terminal 25 residues, 1–25 (MSRRSLTLLKNLARNANGSGIQTRS), are a transit peptide targeting the mitochondrion.

Belongs to the isocitrate and isopropylmalate dehydrogenases family. Heterooligomer of catalytic and regulatory subunits. In terms of tissue distribution, ubiquitous. Predominantly expressed in roots, stems and leaves.

The protein resides in the mitochondrion. Performs an essential role in the oxidative function of the citric acid cycle. The chain is Isocitrate dehydrogenase [NAD] regulatory subunit 1, mitochondrial (IDH1) from Arabidopsis thaliana (Mouse-ear cress).